The sequence spans 172 residues: Large ribosomal subunit protein eL20A (172 aa).

Serine 32 carries the phosphoserine modification. Residues lysine 125, lysine 131, and lysine 149 each participate in a glycyl lysine isopeptide (Lys-Gly) (interchain with G-Cter in ubiquitin) cross-link.

Belongs to the eukaryotic ribosomal protein eL20 family. As to quaternary structure, component of the large ribosomal subunit (LSU). Mature yeast ribosomes consist of a small (40S) and a large (60S) subunit. The 40S small subunit contains 1 molecule of ribosomal RNA (18S rRNA) and 33 different proteins (encoded by 57 genes). The large 60S subunit contains 3 rRNA molecules (25S, 5.8S and 5S rRNA) and 46 different proteins (encoded by 81 genes). eL20 forms multiple interactions with RNA and proteins in the central protuberance, connecting components of core functional centers that are located far apart.

It is found in the cytoplasm. In terms of biological role, component of the ribosome, a large ribonucleoprotein complex responsible for the synthesis of proteins in the cell. The small ribosomal subunit (SSU) binds messenger RNAs (mRNAs) and translates the encoded message by selecting cognate aminoacyl-transfer RNA (tRNA) molecules. The large subunit (LSU) contains the ribosomal catalytic site termed the peptidyl transferase center (PTC), which catalyzes the formation of peptide bonds, thereby polymerizing the amino acids delivered by tRNAs into a polypeptide chain. The nascent polypeptides leave the ribosome through a tunnel in the LSU and interact with protein factors that function in enzymatic processing, targeting, and the membrane insertion of nascent chains at the exit of the ribosomal tunnel. The polypeptide is Large ribosomal subunit protein eL20A (Saccharomyces cerevisiae (strain ATCC 204508 / S288c) (Baker's yeast)).